A 309-amino-acid polypeptide reads, in one-letter code: Mycothiol acetyltransferase (309 aa).

N-acetyltransferase domains follow at residues 16–158 and 166–309; these read ETLA…LDLP and VSVR…RTET. Glutamate 47 serves as a coordination point for 1D-myo-inositol 2-(L-cysteinylamino)-2-deoxy-alpha-D-glucopyranoside. Position 92-94 (92-94) interacts with acetyl-CoA; it reads LVV. Residues glutamate 193, lysine 232, and glutamate 241 each contribute to the 1D-myo-inositol 2-(L-cysteinylamino)-2-deoxy-alpha-D-glucopyranoside site. Acetyl-CoA-binding positions include 245-247 and 252-258; these read LGI and QGGGLGK. Tyrosine 279 contributes to the 1D-myo-inositol 2-(L-cysteinylamino)-2-deoxy-alpha-D-glucopyranoside binding site.

This sequence belongs to the acetyltransferase family. MshD subfamily. Monomer.

It carries out the reaction 1D-myo-inositol 2-(L-cysteinylamino)-2-deoxy-alpha-D-glucopyranoside + acetyl-CoA = mycothiol + CoA + H(+). Functionally, catalyzes the transfer of acetyl from acetyl-CoA to desacetylmycothiol (Cys-GlcN-Ins) to form mycothiol. This Streptomyces coelicolor (strain ATCC BAA-471 / A3(2) / M145) protein is Mycothiol acetyltransferase.